A 171-amino-acid chain; its full sequence is Disulfide bond formation protein B (171 aa).

At M1 to L10 the chain is on the cytoplasmic side. Residues N11–I27 traverse the membrane as a helical segment. The Periplasmic portion of the chain corresponds to F28 to I46. C38 and C41 are joined by a disulfide. The chain crosses the membrane as a helical span at residues G47–P63. Over K64–L70 the chain is Cytoplasmic. A helical transmembrane segment spans residues L71–A88. Residues R89 to E145 lie on the Periplasmic side of the membrane. C104 and C131 are joined by a disulfide. A helical membrane pass occupies residues Q146–R164. At I165–A171 the chain is on the cytoplasmic side.

The protein belongs to the DsbB family.

It localises to the cell inner membrane. Its function is as follows. Required for disulfide bond formation in some periplasmic proteins. Acts by oxidizing the DsbA protein. This chain is Disulfide bond formation protein B, found in Psychrobacter sp. (strain PRwf-1).